The primary structure comprises 297 residues: Pyridoxal 5'-phosphate synthase subunit PdxS (297 aa).

Asp27 is a binding site for D-ribose 5-phosphate. The Schiff-base intermediate with D-ribose 5-phosphate role is filled by Lys84. Position 156 (Gly156) interacts with D-ribose 5-phosphate. Arg168 serves as a coordination point for D-glyceraldehyde 3-phosphate. D-ribose 5-phosphate is bound by residues Gly217 and 238–239 (GS).

The protein belongs to the PdxS/SNZ family. In terms of assembly, in the presence of PdxT, forms a dodecamer of heterodimers.

The catalysed reaction is aldehydo-D-ribose 5-phosphate + D-glyceraldehyde 3-phosphate + L-glutamine = pyridoxal 5'-phosphate + L-glutamate + phosphate + 3 H2O + H(+). It functions in the pathway cofactor biosynthesis; pyridoxal 5'-phosphate biosynthesis. Its function is as follows. Catalyzes the formation of pyridoxal 5'-phosphate from ribose 5-phosphate (RBP), glyceraldehyde 3-phosphate (G3P) and ammonia. The ammonia is provided by the PdxT subunit. Can also use ribulose 5-phosphate and dihydroxyacetone phosphate as substrates, resulting from enzyme-catalyzed isomerization of RBP and G3P, respectively. This Corynebacterium diphtheriae (strain ATCC 700971 / NCTC 13129 / Biotype gravis) protein is Pyridoxal 5'-phosphate synthase subunit PdxS.